The chain runs to 60 residues: Large ribosomal subunit protein bL32 (60 aa).

Positions 1 to 23 (MAKHPVPKKKTSKARRDARRSHH) are enriched in basic residues. Positions 1–30 (MAKHPVPKKKTSKARRDARRSHHALTPPTL) are disordered.

In terms of assembly, part of the 50S ribosomal subunit.

Functionally, found on the solvent side of the large subunit. The polypeptide is Large ribosomal subunit protein bL32 (rpmF) (Thermus thermophilus (strain ATCC 27634 / DSM 579 / HB8)).